The following is a 213-amino-acid chain: MSDRAMVVRVRQHVNPLSQKFQQDIPVPDWSRIYEQPSQPLHLDIGCARGTFLLEMAALYPEQNFLGLEIRYPLVVAANERRDRQQLRNLHYLWGNANVHLSKILGGLPLHTVTIQFPDPWFKRRHHKRRVVTPELVATLAELLPAGGRVVLQSDVFEVAESMVQQFRAHGAFRSTCTDWLPQSPWPVATEREKCVLNKGLAVYRWQFERCAV.

Positions 44, 69, 96, and 119 each coordinate S-adenosyl-L-methionine. The active site involves D119. Substrate is bound by residues K123 and D155.

The protein belongs to the class I-like SAM-binding methyltransferase superfamily. TrmB family.

It catalyses the reaction guanosine(46) in tRNA + S-adenosyl-L-methionine = N(7)-methylguanosine(46) in tRNA + S-adenosyl-L-homocysteine. It functions in the pathway tRNA modification; N(7)-methylguanine-tRNA biosynthesis. Functionally, catalyzes the formation of N(7)-methylguanine at position 46 (m7G46) in tRNA. The protein is tRNA (guanine-N(7)-)-methyltransferase of Thermosynechococcus vestitus (strain NIES-2133 / IAM M-273 / BP-1).